The following is a 335-amino-acid chain: Aspartate--ammonia ligase (335 aa).

The protein belongs to the class-II aminoacyl-tRNA synthetase family. AsnA subfamily.

Its subcellular location is the cytoplasm. It carries out the reaction L-aspartate + NH4(+) + ATP = L-asparagine + AMP + diphosphate + H(+). Its pathway is amino-acid biosynthesis; L-asparagine biosynthesis; L-asparagine from L-aspartate (ammonia route): step 1/1. The chain is Aspartate--ammonia ligase from Pediococcus pentosaceus (strain ATCC 25745 / CCUG 21536 / LMG 10740 / 183-1w).